We begin with the raw amino-acid sequence, 378 residues long: Ferredoxin--NADP reductase, root isozyme, chloroplastic (378 aa).

Residues 1-17 (MATAVASQVAVSAPAGS) show a composition bias toward low complexity. The disordered stretch occupies residues 1–27 (MATAVASQVAVSAPAGSDRGLRSSGIQ). The transit peptide at 1-62 (MATAVASQVA…PRHANKVLCM (62 aa)) directs the protein to the chloroplast. Residues 93 to 221 (KEPYTATIVS…TGPSGKIMLL (129 aa)) form the FAD-binding FR-type domain. FAD contacts are provided by residues 153 to 156 (RLYS), 174 to 176 (CVR), tyrosine 180, 195 to 197 (VCS), and threonine 237. NADP(+)-binding residues include serine 156 and arginine 176. NADP(+)-binding positions include threonine 237, 269–270 (VA), 299–300 (SR), lysine 309, 337–338 (GL), and glutamate 376.

Belongs to the ferredoxin--NADP reductase type 1 family. The cofactor is FAD.

The protein localises to the plastid. It localises to the chloroplast. The catalysed reaction is 2 reduced [2Fe-2S]-[ferredoxin] + NADP(+) + H(+) = 2 oxidized [2Fe-2S]-[ferredoxin] + NADPH. It functions in the pathway energy metabolism; photosynthesis. Functionally, may play a key role in regulating the relative amounts of cyclic and non-cyclic electron flow to meet the demands of the plant for ATP and reducing power. Is involved in nitrate assimilation. This chain is Ferredoxin--NADP reductase, root isozyme, chloroplastic, found in Oryza sativa subsp. japonica (Rice).